The sequence spans 289 residues: MASGKEIRGKIKSVENTKKITKAMEMVAASKMRKAQERMHAARPYSDKIRNIAANLSQANPEYTHPFLVKSDVSKTVGFIIVTTDKGLCGGMNTNSLRIVTTKLRELEAQGKKVETVAIGNKGLGFLNRIGARVVSHAVQIGDTPHLDKLIGPVKVMLDAYQDGKLDAVYVVYTKFINTMKQEPMMEQLLPLAADALKADADSLAWDYIYEPDAQTVIDELLIRYVEALIFQSVAENLASEQSARMVAMKSASDNAGSVIGELKLVYNKTRQAAITKELSEIVAGAAAV.

Belongs to the ATPase gamma chain family. As to quaternary structure, F-type ATPases have 2 components, CF(1) - the catalytic core - and CF(0) - the membrane proton channel. CF(1) has five subunits: alpha(3), beta(3), gamma(1), delta(1), epsilon(1). CF(0) has three main subunits: a, b and c.

It localises to the cell inner membrane. Its function is as follows. Produces ATP from ADP in the presence of a proton gradient across the membrane. The gamma chain is believed to be important in regulating ATPase activity and the flow of protons through the CF(0) complex. The protein is ATP synthase gamma chain of Herminiimonas arsenicoxydans.